The sequence spans 170 residues: Probable calcium-binding protein CML29 (170 aa).

EF-hand domains lie at 27 to 62 (SYIS…LGLD), 63 to 98 (KPEH…GQLG), and 138 to 170 (ASVE…AQLL). Ca(2+) contacts are provided by Asp40, Asp42, Asp44, Glu51, Asp76, Asp78, Asp80, Lys82, Glu87, Asp151, Asp153, Asp155, and Glu162.

Potential calcium sensor. In Oryza sativa subsp. japonica (Rice), this protein is Probable calcium-binding protein CML29 (CML29).